The chain runs to 306 residues: D-alanine--D-alanine ligase (306 aa).

Residues 105-300 (KMIWQAAGIS…FDELVIQILE (196 aa)) form the ATP-grasp domain. Position 131 to 186 (131 to 186 (TDRLGLPLIIKPAREGSTIGLNKVDYAQDMQSAYQTAAQHDSLVIAEQFIQGIELT)) interacts with ATP. Mg(2+)-binding residues include Asp254, Glu267, and Asn269.

This sequence belongs to the D-alanine--D-alanine ligase family. Mg(2+) is required as a cofactor. Requires Mn(2+) as cofactor.

Its subcellular location is the cytoplasm. It carries out the reaction 2 D-alanine + ATP = D-alanyl-D-alanine + ADP + phosphate + H(+). It functions in the pathway cell wall biogenesis; peptidoglycan biosynthesis. Functionally, cell wall formation. This Nitrosomonas eutropha (strain DSM 101675 / C91 / Nm57) protein is D-alanine--D-alanine ligase.